The following is a 307-amino-acid chain: ADP,ATP carrier protein 3 (307 aa).

Solcar repeat units follow at residues 10–103 (TNFA…IKLM), 114–206 (KWFA…LKPL), and 214–300 (GSFL…LQMI). 5 helical membrane-spanning segments follow: residues 12-39 (FAIN…VKIL), 80-104 (TANV…KLMF), 112-132 (YGKW…LSLL), 182-203 (FMPS…FDSL), and 217-237 (LASF…SYPL). 2 residues coordinate ADP: arginine 85 and lysine 97. An ADP-binding site is contributed by arginine 241. Residues 241–246 (RRRMMM) are important for transport activity. The Nucleotide carrier signature motif signature appears at 241–246 (RRRMMM). The helical transmembrane segment at 277 to 297 (CGANILRSVAGAGVISMYDQL) threads the bilayer.

The protein belongs to the mitochondrial carrier (TC 2.A.29) family. In terms of assembly, monomer.

The protein localises to the mitochondrion inner membrane. It catalyses the reaction ADP(in) + ATP(out) = ADP(out) + ATP(in). The matrix-open state (m-state) is inhibited by the membrane-permeable bongkrekic acid (BKA). The cytoplasmic-open state (c-state) is inhibited by the membrane-impermeable toxic inhibitor carboxyatractyloside (CATR). In terms of biological role, ADP:ATP antiporter that mediates import of ADP into the mitochondrial matrix for ATP synthesis, and export of ATP out to fuel the cell. Cycles between the cytoplasmic-open state (c-state) and the matrix-open state (m-state): operates by the alternating access mechanism with a single substrate-binding site intermittently exposed to either the cytosolic (c-state) or matrix (m-state) side of the inner mitochondrial membrane. The polypeptide is ADP,ATP carrier protein 3 (AAC3) (Saccharomyces cerevisiae (strain ATCC 204508 / S288c) (Baker's yeast)).